The following is a 154-amino-acid chain: Probable prefoldin subunit 5 (154 aa).

Belongs to the prefoldin subunit alpha family. As to quaternary structure, heterohexamer of two PFD-alpha type and four PFD-beta type subunits. Interacts with byr1.

It localises to the cytoplasm. Functionally, binds specifically to cytosolic chaperonin (c-CPN) and transfers target proteins to it. Binds to nascent polypeptide chain and promotes folding in an environment in which there are many competing pathways for nonnative proteins. Required for normal cytoskeletal function and when bound to byr1, is involved in the regulation of sexual differentiation. The sequence is that of Probable prefoldin subunit 5 (bob1) from Schizosaccharomyces pombe (strain 972 / ATCC 24843) (Fission yeast).